The chain runs to 472 residues: 3-isopropylmalate dehydratase large subunit (472 aa).

3 residues coordinate [4Fe-4S] cluster: Cys-347, Cys-407, and Cys-410.

The protein belongs to the aconitase/IPM isomerase family. LeuC type 1 subfamily. In terms of assembly, heterodimer of LeuC and LeuD. The cofactor is [4Fe-4S] cluster.

It catalyses the reaction (2R,3S)-3-isopropylmalate = (2S)-2-isopropylmalate. It participates in amino-acid biosynthesis; L-leucine biosynthesis; L-leucine from 3-methyl-2-oxobutanoate: step 2/4. Functionally, catalyzes the isomerization between 2-isopropylmalate and 3-isopropylmalate, via the formation of 2-isopropylmaleate. This Synechococcus sp. (strain CC9605) protein is 3-isopropylmalate dehydratase large subunit.